Consider the following 238-residue polypeptide: Probable transcriptional regulatory protein YeeN (238 aa).

Belongs to the TACO1 family. YeeN subfamily.

It localises to the cytoplasm. In Salmonella typhi, this protein is Probable transcriptional regulatory protein YeeN.